Consider the following 224-residue polypeptide: Oxalate oxidase GF-3.8 (224 aa).

Residues 1–23 (MGYSKNIASGMFAMLLLASAVLS) form the signal peptide. A disulfide bridge connects residues Cys33 and Cys49. One can recognise a Cupin type-1 domain in the interval 63–214 (SKLAKAGNTS…ALRVEAGVVE (152 aa)). Residues Asn70 and Asn75 are each glycosylated (N-linked (GlcNAc...) asparagine). Positions 111, 113, 118, and 160 each coordinate Mn(2+).

This sequence belongs to the germin family. As to quaternary structure, oligomer (believed to be a pentamer but probably hexamer).

The protein localises to the secreted. The protein resides in the extracellular space. Its subcellular location is the apoplast. It is found in the cytoplasm. It localises to the cell wall. It catalyses the reaction oxalate + O2 + 2 H(+) = H2O2 + 2 CO2. Produces developmental and stress-related release of hydrogen peroxide in the apoplast. May play an important role in several aspects of plant growth and defense mechanisms. This is Oxalate oxidase GF-3.8 from Triticum aestivum (Wheat).